We begin with the raw amino-acid sequence, 353 residues long: ATP-dependent (S)-NAD(P)H-hydrate dehydratase (353 aa).

Residues 18–345 (MLARVRQMVP…DEVHTAFLNL (328 aa)) form the YjeF C-terminal domain. The segment at 95–121 (RSSPPALSSSDSGSSPSRTKSAPDTDP) is disordered. A compositionally biased stretch (low complexity) spans 96–114 (SSPPALSSSDSGSSPSRTK). (6S)-NADPHX-binding positions include G143 and 196–202 (NVVEFGR). Residues 241–245 (KGAKD) and 260–269 (GGLKRSGGQG) contribute to the ATP site. D270 contacts (6S)-NADPHX.

This sequence belongs to the NnrD/CARKD family. Requires Mg(2+) as cofactor.

It is found in the cytoplasm. The catalysed reaction is (6S)-NADHX + ATP = ADP + phosphate + NADH + H(+). It carries out the reaction (6S)-NADPHX + ATP = ADP + phosphate + NADPH + H(+). In terms of biological role, catalyzes the dehydration of the S-form of NAD(P)HX at the expense of ATP, which is converted to ADP. Together with NAD(P)HX epimerase, which catalyzes the epimerization of the S- and R-forms, the enzyme allows the repair of both epimers of NAD(P)HX, a damaged form of NAD(P)H that is a result of enzymatic or heat-dependent hydration. The sequence is that of ATP-dependent (S)-NAD(P)H-hydrate dehydratase from Neurospora crassa (strain ATCC 24698 / 74-OR23-1A / CBS 708.71 / DSM 1257 / FGSC 987).